We begin with the raw amino-acid sequence, 177 residues long: NAD(P)H-quinone oxidoreductase subunit 6, chloroplastic (177 aa).

5 helical membrane-spanning segments follow: residues 10–30 (ILLV…VLLT), 32–52 (PIYS…FYIP), 61–81 (AQLL…VMFM), 92–112 (FWTV…FSLI), and 152–172 (FYLP…GAIA).

This sequence belongs to the complex I subunit 6 family. NDH is composed of at least 16 different subunits, 5 of which are encoded in the nucleus.

It is found in the plastid. The protein resides in the chloroplast thylakoid membrane. It catalyses the reaction a plastoquinone + NADH + (n+1) H(+)(in) = a plastoquinol + NAD(+) + n H(+)(out). The enzyme catalyses a plastoquinone + NADPH + (n+1) H(+)(in) = a plastoquinol + NADP(+) + n H(+)(out). Functionally, NDH shuttles electrons from NAD(P)H:plastoquinone, via FMN and iron-sulfur (Fe-S) centers, to quinones in the photosynthetic chain and possibly in a chloroplast respiratory chain. The immediate electron acceptor for the enzyme in this species is believed to be plastoquinone. Couples the redox reaction to proton translocation, and thus conserves the redox energy in a proton gradient. This Nymphaea alba (White water-lily) protein is NAD(P)H-quinone oxidoreductase subunit 6, chloroplastic (ndhG).